Reading from the N-terminus, the 3102-residue chain is Laminin subunit alpha lam-3 (3102 aa).

An N-terminal signal peptide occupies residues Met-1–Gly-16. N-linked (GlcNAc...) asparagine glycosylation is found at Asn-19, Asn-135, and Asn-237. The region spanning Ser-44 to Gln-295 is the Laminin N-terminal domain. 16 disulfide bridges follow: Cys-296/Cys-305, Cys-298/Cys-316, Cys-318/Cys-327, Cys-330/Cys-350, Cys-353/Cys-362, Cys-355/Cys-387, Cys-390/Cys-399, Cys-402/Cys-420, Cys-423/Cys-435, Cys-425/Cys-451, Cys-453/Cys-462, Cys-465/Cys-475, Cys-478/Cys-491, Cys-480/Cys-496, Cys-498/Cys-507, and Cys-510/Cys-525. Laminin EGF-like domains follow at residues Cys-296–Gln-352, Cys-353–Thr-422, Cys-423–Pro-477, and Cys-478–Pro-527. Residues Ile-548–Val-740 form the Laminin IV type A 1 domain. 31 cysteine pairs are disulfide-bonded: Cys-774-Cys-783, Cys-776-Cys-790, Cys-793-Cys-802, Cys-805-Cys-822, Cys-825-Cys-838, Cys-827-Cys-858, Cys-861-Cys-870, Cys-873-Cys-886, Cys-889-Cys-903, Cys-891-Cys-910, Cys-913-Cys-922, Cys-925-Cys-938, Cys-941-Cys-953, Cys-943-Cys-960, Cys-962-Cys-971, Cys-974-Cys-985, Cys-988-Cys-1000, Cys-990-Cys-1007, Cys-1009-Cys-1018, Cys-1021-Cys-1033, Cys-1036-Cys-1049, Cys-1038-Cys-1056, Cys-1058-Cys-1067, Cys-1070-Cys-1083, Cys-1086-Cys-1098, Cys-1088-Cys-1105, Cys-1107-Cys-1116, Cys-1119-Cys-1131, Cys-1134-Cys-1144, Cys-1137-Cys-1151, and Cys-1153-Cys-1162. Laminin EGF-like domains lie at Cys-774 to Gln-824, Cys-825 to Glu-888, Cys-889 to Pro-940, Cys-941 to Ala-987, Cys-988 to Phe-1035, Cys-1036 to Asp-1085, Cys-1086 to Glu-1133, Cys-1134 to Leu-1180, Cys-1181 to Pro-1226, and Cys-1227 to Glu-1283. Residue Asn-796 is glycosylated (N-linked (GlcNAc...) asparagine). N-linked (GlcNAc...) asparagine glycosylation occurs at Asn-991. Asn-1027 carries N-linked (GlcNAc...) asparagine glycosylation. An N-linked (GlcNAc...) asparagine glycan is attached at Asn-1076. N-linked (GlcNAc...) asparagine glycosylation occurs at Asn-1164. 9 disulfides stabilise this stretch: Cys-1165–Cys-1178, Cys-1181–Cys-1193, Cys-1183–Cys-1200, Cys-1202–Cys-1211, Cys-1214–Cys-1224, Cys-1227–Cys-1246, Cys-1229–Cys-1252, Cys-1254–Cys-1263, and Cys-1266–Cys-1281. N-linked (GlcNAc...) asparagine glycosylation is present at Asn-1288. A Laminin IV type A 2 domain is found at Gln-1295–Lys-1496. Cystine bridges form between Cys-1540–Cys-1549, Cys-1542–Cys-1556, Cys-1559–Cys-1568, Cys-1571–Cys-1587, Cys-1590–Cys-1603, Cys-1592–Cys-1614, Cys-1617–Cys-1626, Cys-1629–Cys-1644, Cys-1647–Cys-1659, Cys-1649–Cys-1666, Cys-1668–Cys-1677, and Cys-1680–Cys-1691. 3 Laminin EGF-like domains span residues Cys-1540–Lys-1589, Cys-1590–Pro-1646, and Cys-1647–Ser-1693. 9 N-linked (GlcNAc...) asparagine glycosylation sites follow: Asn-1717, Asn-1734, Asn-1777, Asn-1806, Asn-1839, Asn-1875, Asn-1969, Asn-1984, and Asn-2048. The interval Glu-2061 to Ser-2084 is disordered. 4 N-linked (GlcNAc...) asparagine glycosylation sites follow: Asn-2091, Asn-2193, Asn-2369, and Asn-2479. 3 Laminin G-like domains span residues Ser-2467 to Cys-2644, Asp-2652 to Cys-2839, and Arg-2913 to Cys-3088. Cys-2617 and Cys-2644 are joined by a disulfide. Asn-2672 and Asn-2686 each carry an N-linked (GlcNAc...) asparagine glycan. Residues Cys-2814 and Cys-2839 are joined by a disulfide bond. Asn-2932, Asn-2959, and Asn-3007 each carry an N-linked (GlcNAc...) asparagine glycan. Residues Cys-3058 and Cys-3088 are joined by a disulfide bond.

In terms of assembly, laminin is a complex glycoprotein, consisting of three different polypeptide chains (alpha, beta, gamma), which are bound to each other by disulfide bonds into a cross-shaped molecule comprising one long and three short arms with globules at each end.

It is found in the secreted. It localises to the extracellular space. The protein resides in the extracellular matrix. Its subcellular location is the basement membrane. Binding to cells via a high affinity receptor, laminin is thought to mediate the attachment, migration and organization of cells into tissues during embryonic development by interacting with other extracellular matrix components. Required to assemble a stable basement membrane and for organizing receptor complexes and cytoskeletal components to the proper cell surfaces. During embryogenesis, does not require the presence of collagen type IV in order to associate with cell surfaces, prior to assembly of the prototypical basement membrane. Plays an important role in muscle contraction of the body. Probably plays a distinct role from the related laminin subunit alpha epi-1. This is Laminin subunit alpha lam-3 from Caenorhabditis elegans.